Reading from the N-terminus, the 193-residue chain is Ganglioside GM2 activator (193 aa).

The N-terminal stretch at 1–20 (MHRLPLLLLLGLLLAGSVAP) is a signal peptide. 4 disulfide bridges follow: C39/C183, C99/C106, C112/C138, and C125/C136. The N-linked (GlcNAc...) asparagine glycan is linked to N151.

In terms of tissue distribution, widely expressed. Most abundant in kidney and testis.

It localises to the lysosome. It carries out the reaction cholesterol(in) = cholesterol(out). In terms of biological role, binds gangliosides and stimulates ganglioside GM2 degradation. It stimulates only the breakdown of ganglioside GM2 and glycolipid GA2 by beta-hexosaminidase A. It extracts single GM2 molecules from membranes and presents them in soluble form to beta-hexosaminidase A for cleavage of N-acetyl-D-galactosamine and conversion to GM3. The large binding pocket can accommodate several single chain phospholipids and fatty acids, GM2A also exhibits some calcium-independent phospholipase activity. Has cholesterol transfer activity. This chain is Ganglioside GM2 activator, found in Mus musculus (Mouse).